Here is a 355-residue protein sequence, read N- to C-terminus: Probable butyrate kinase (355 aa).

It belongs to the acetokinase family.

Its subcellular location is the cytoplasm. The enzyme catalyses butanoate + ATP = butanoyl phosphate + ADP. The chain is Probable butyrate kinase from Listeria monocytogenes serotype 4a (strain HCC23).